Reading from the N-terminus, the 920-residue chain is MKEYKDTLNLNTTTFSMKGNLSVNEPKTYAKWQEQQAFKRMQNRKDNHGDFTLHDGPPYANGHLHLGHALNKILKDIVVKREYFKGNKIYYTPGWDCHGLPIEQQILERLEKEKTSLENPTLFREKCRDHAKKFLEIQKNEFLQLGVLGDFEDPYKTMDFKFEASIYRALVEVAKKGLLKERHKPIYWSYACESALAEAEVEYKMKKSPSIFVAFGLKKESLEKLKVKKASLVIWTTTPWTLYANVAIALKKDAVYALTQKGYLVAKALHEKLAALGVVDSEIVHEFNSNDLEYLKATNPLNQRDSLITLGEHVGLEDGTGAVHTAPGHGEEDYYLGLRYNLEVLMSVDERGCYDEGIIHNQLLDESYLGEHVFKAQKRIIEQLGDSLLLEQEIEHSYPHCWRTHKPVIYRATTQWFILMDEPFIQNDGSQKTLREVALNAIEKVEFVPNSGKNRLKTMIENRPDWCLSRQRKWGVPLAFFIDKRTNKPCFESEVLEHVANLFEKKGCDVWWEYSVKDLLPPSYQEDAMHYEKVMHILDVWFDSGSTFKAVLEDYHGEKGQSPSDVILEGSDQHRGWFQSSLLIGCILNNQAPFKKVITHGFIVDEKGEKMSKSKGNVVSLDNLLKKHGSDVVRLWVAFNDYQNDLRVSQTFFIQTEQHYKKFRNTLKFLLANFSDMDLKNLERSHDFSPLDHFILEALETTSTGVNSAFEEHDFVKGLNILMAFVTNELSGIYLDACKDSLYCDSKNNEKRQAIQMVLLAIASKLCYFLAPILTHTIEEVLEHSQVLCAFLQAKDVFDLKGISVSEKLHLKEFKKPENFEAVLALRSAFNEELDRLKKESVVKNSLECAIEVKEKALRENLIEELLMVSFVGVAKEKLSETPAFTLFKAPFYKCPRCWRFKSELENTPCKRCEEVLKER.

Residues 58–68 (PYANGHLHLGH) carry the 'HIGH' region motif. L-isoleucyl-5'-AMP is bound at residue E569. Residues 610–614 (KMSKS) carry the 'KMSKS' region motif. K613 is an ATP binding site. Zn(2+) is bound by residues C895, C898, C910, and C913.

It belongs to the class-I aminoacyl-tRNA synthetase family. IleS type 1 subfamily. As to quaternary structure, monomer. It depends on Zn(2+) as a cofactor.

It localises to the cytoplasm. It catalyses the reaction tRNA(Ile) + L-isoleucine + ATP = L-isoleucyl-tRNA(Ile) + AMP + diphosphate. Functionally, catalyzes the attachment of isoleucine to tRNA(Ile). As IleRS can inadvertently accommodate and process structurally similar amino acids such as valine, to avoid such errors it has two additional distinct tRNA(Ile)-dependent editing activities. One activity is designated as 'pretransfer' editing and involves the hydrolysis of activated Val-AMP. The other activity is designated 'posttransfer' editing and involves deacylation of mischarged Val-tRNA(Ile). The polypeptide is Isoleucine--tRNA ligase (Helicobacter pylori (strain P12)).